The primary structure comprises 456 residues: Probable polygalacturonase At3g15720 (456 aa).

Positions 1–23 (MKKKTWFLNFSLFFLQIFTSSNA) are cleaved as a signal peptide. PbH1 repeat units follow at residues 169–195 (CNYV…DVGA), 196–217 (SSNV…AINS), 219–239 (TSNI…SIGS), 249–270 (VENV…RIKT), 278–299 (ARMI…IIDQ), and 314–341 (SSAV…DFRC). The Proton donor role is filled by Asp210. The active site involves His233.

This sequence belongs to the glycosyl hydrolase 28 family.

It localises to the secreted. It is found in the cell wall. The enzyme catalyses (1,4-alpha-D-galacturonosyl)n+m + H2O = (1,4-alpha-D-galacturonosyl)n + (1,4-alpha-D-galacturonosyl)m.. The polypeptide is Probable polygalacturonase At3g15720 (Arabidopsis thaliana (Mouse-ear cress)).